We begin with the raw amino-acid sequence, 345 residues long: Delta(6)-protoilludene synthase (345 aa).

Asp-84, Asn-220, Ser-224, and Glu-228 together coordinate Mg(2+). The DDXXD motif motif lies at 84–88 (DEYSD). (2E,6E)-farnesyl diphosphate contacts are provided by Arg-309 and Tyr-310.

It belongs to the terpene synthase family. In terms of assembly, monomer. It depends on Mg(2+) as a cofactor.

It carries out the reaction (2E,6E)-farnesyl diphosphate = Delta(6)-protoilludene + diphosphate. It functions in the pathway secondary metabolite biosynthesis. Its function is as follows. Delta(6)-protoilludene synthase, part of the gene cluster that mediates the biosynthesis of melleolides, a range of antifungal and phytotoxic polyketide derivatives composed of an orsellinic acid (OA) moiety esterified to various sesquiterpene alcohols. The first step in melleolides biosynthesis is performed by the delta(6)-protoilludene synthase PRO1 which catalyzes the cyclization of farnesyl diphosphate to protoilludene. The orsellinic acid synthase armB produces OA by condensing acetyl-CoA with 3 malonyl-CoA units in a three-round chain elongation reaction folowed by a C2-C7 ring closure. ArmB further catalyzes the trans-esterification of OA to the various sesquiterpene alcohols resulting from the hydroxylation of protoilludene. The melleolides cluster also includes 5 cytochrome P450 monooxygenases, 4 NAD(+)-dependent oxidoreductases, one flavin-dependent oxidoreductase, and one O-methyltransferase. The cytochrome P450 monooxygenases may be involved in protoilludene hydroxylation to elaborate melleolides with multiple alcohol groups, such as melleolide D, which carries alcohol functionalities at C-4, C-5, C-10, and C-13. The role of the NAD(+)-dependent enzymes remains unknown. Numerous melleolides, including arnamial, show 5'-O-methylation of the aromatic moiety which may be catalyzed by the methyltransferase encoded in the cluster. The flavin-dependent oxidoreductase might represent the dehydrogenase yielding the aldehyde in position 1 of arnamial and other melleolides. Finally, several halogenases, localized outside of the cluster, are able to catalyze the transfer of a single chlorine atom to the melleolide backbone, resulting in a 6'-chloromelleolide product. This Armillaria gallica (Bulbous honey fungus) protein is Delta(6)-protoilludene synthase.